We begin with the raw amino-acid sequence, 646 residues long: Cysteine-rich receptor-like protein kinase 37 (646 aa).

An N-terminal signal peptide occupies residues 1-26; the sequence is MGKSCVVTSSFSLLLLFLQTLKYVHA. 2 consecutive Gnk2-homologous domains span residues 27-132 and 142-252; these read GFIC…NHST and TINP…LYPY. Residues 27–287 lie on the Extracellular side of the membrane; it reads GFICYGDFFN…RDEKSFQGSN (261 aa). Residues Asn62, Asn129, Asn169, and Asn180 are each glycosylated (N-linked (GlcNAc...) asparagine). The helical transmembrane segment at 288 to 308 threads the bilayer; it reads IAIIVVPSVINLIIFVVLIFS. Topologically, residues 309–646 are cytoplasmic; that stretch reads WKRKQSHTII…LTRPSLSLGH (338 aa). The Protein kinase domain occupies 345 to 626; sequence FSLENKLGQG…LFWLERHATI (282 aa). Residues 351–359 and Lys373 each bind ATP; that span reads LGQGGFGSV. Tyr418 carries the phosphotyrosine modification. The active-site Proton acceptor is Asp470. Phosphoserine is present on Ser474. Thr510 is modified (phosphothreonine). At Tyr518 the chain carries Phosphotyrosine.

The protein belongs to the protein kinase superfamily. Ser/Thr protein kinase family. CRK subfamily.

Its subcellular location is the membrane. The catalysed reaction is L-seryl-[protein] + ATP = O-phospho-L-seryl-[protein] + ADP + H(+). It catalyses the reaction L-threonyl-[protein] + ATP = O-phospho-L-threonyl-[protein] + ADP + H(+). In Arabidopsis thaliana (Mouse-ear cress), this protein is Cysteine-rich receptor-like protein kinase 37 (CRK37).